A 1185-amino-acid polypeptide reads, in one-letter code: MSLLNPVLLPPKVKAYLSQGERFIKWDDETTVASPVILRVDPKGYYLYWTYQSKEMEFLDITSIRDTRFGKFAKMPKSQKLRDVFNMDFPDNSFLLKTLTVVSGPDMVDLTFHNFVSYKENVGKAWAEDVLALVKHPLTANASRSTFLDKILVKLKMQLNSEGKIPVKNFFQMFPADRKRVEAALSACHLPKGKNDAINPEDFPEPVYKSFLMSLCPRPEIDEIFTSYHAKAKPYMTKEHLTKFINQKQRDSRLNSLLFPPARPDQVQGLIDKYEPSGINAQRGQLSPEGMVWFLCGPENSVLAQDKLLLHHDMTQPLNHYFINSSHNTYLTAGQFSGLSSAEMYRQVLLSGCRCVELDCWKGKPPDEEPIITHGFTMTTDIFFKEAIEAIAESAFKTSPYPIILSFENHVDSPRQQAKMAEYCRTIFGDMLLTEPLEKFPLKPGVPLPSPEDLRGKILIKNKKNQFSGPTSSSKDTGGEAEGSSPPSAPAGEGTVWAGEEGTELEEEEVEEEEEEESGNLDEEEIKKMQSDEGTAGLEVTAYEEMSSLVNYIQPTKFVSFEFSAQKNRSYVISSFTELKAYDLLSKASVQFVDYNKRQMSRIYPKGTRMDSSNYMPQMFWNAGCQMVALNFQTMDLPMQQNMAVFEFNGQSGYLLKHEFMRRPDKQFNPFSVDRIDVVVATTLSITVISGQFLSERSVRTYVEVELFGLPGDPKRRYRTKLSPSTNSINPVWKEEPFVFEKILMPELASLRVAVMEEGNKFLGHRIIPINALNSGYHHLCLHSESNMPLTMPALFIFLEMKDYIPGAWADLTVALANPIKFFSAHDTKSVKLKEAMGGLPEKPFPLASPVASQVNGALAPTSNGSPAARAGAREEAMKEAAEPRTASLEELRELKGVVKLQRRHEKELRELERRGARRWEELLQRGAAQLAELGPPGVGGVGACKLGPGKGSRKKRSLPREESAGAAPGEGPEGVDGRVRELKDRLELELLRQGEEQYECVLKRKEQHVAEQISKMMELAREKQAAELKALKETSENDTKEMKKKLETKRLERIQGMTKVTTDKMAQERLKREINNSHIQEVVQVIKQMTENLERHQEKLEEKQAACLEQIREMEKQFQKEALAEYEARMKGLEAEVKESVRACLRTCFPSEAKDKPERACECPPELCEQDPLIAKADAQESRL.

In terms of domain architecture, PI-PLC X-box spans 312-463; the sequence is HDMTQPLNHY…LRGKILIKNK (152 aa). Residue His327 is part of the active site. The Ca(2+) site is built by Asn328, Glu357, and Asp359. His374 is a catalytic residue. Glu408 contributes to the Ca(2+) binding site. The tract at residues 460–533 is disordered; it reads IKNKKNQFSG…EEIKKMQSDE (74 aa). Positions 465–476 are enriched in polar residues; the sequence is NQFSGPTSSSKD. Over residues 501–524 the composition is skewed to acidic residues; sequence EGTELEEEEVEEEEEEESGNLDEE. The PI-PLC Y-box domain maps to 546–662; the sequence is MSSLVNYIQP…GYLLKHEFMR (117 aa). A C2 domain is found at 662-790; it reads RRPDKQFNPF…CLHSESNMPL (129 aa). Disordered regions lie at residues 859-888 and 943-979; these read LAPT…RTAS and GACK…VDGR. Basic and acidic residues predominate over residues 872-888; sequence GAREEAMKEAAEPRTAS. Residue Ser953 is modified to Phosphoserine. A coiled-coil region spans residues 988-1147; it reads ELELLRQGEE…VKESVRACLR (160 aa).

As to quaternary structure, interacts with RAC1. Forms a complex composed of at least WDR26, a G-beta:gamma unit, and PLCB2. Ca(2+) serves as cofactor.

It carries out the reaction a 1,2-diacyl-sn-glycero-3-phospho-(1D-myo-inositol-4,5-bisphosphate) + H2O = 1D-myo-inositol 1,4,5-trisphosphate + a 1,2-diacyl-sn-glycerol + H(+). The catalysed reaction is a 1,2-diacyl-sn-glycero-3-phospho-(1D-myo-inositol) + H2O = 1D-myo-inositol 1-phosphate + a 1,2-diacyl-sn-glycerol + H(+). Its function is as follows. The production of the second messenger molecules diacylglycerol (DAG) and inositol 1,4,5-trisphosphate (IP3) is mediated by activated phosphatidylinositol-specific phospholipase C enzymes. In neutrophils, participates in a phospholipase C-activating N-formyl peptide-activated GPCR (G protein-coupled receptor) signaling pathway by promoting RASGRP4 activation by DAG, to promote neutrophil functional responses. This chain is 1-phosphatidylinositol 4,5-bisphosphate phosphodiesterase beta-2, found in Homo sapiens (Human).